The primary structure comprises 251 residues: Aquaporin TIP1-1 (251 aa).

N-acetylmethionine is present on M1. Residues 1-23 lie on the Cytoplasmic side of the membrane; sequence MPIRNIAIGRPDEATRPDALKAA. The chain crosses the membrane as a helical span at residues 24 to 44; sequence LAEFISTLIFVVAGSGSGMAF. Topologically, residues 45 to 56 are vacuolar; the sequence is NKLTENGATTPS. Residues 57–77 traverse the membrane as a helical segment; it reads GLVAAAVAHAFGLFVAVSVGA. Residues 78–103 lie on the Cytoplasmic side of the membrane; it reads NISGGHVNPAVTFGAFIGGNITLLRG. The NPA 1 signature appears at 85-87; that stretch reads NPA. The chain crosses the membrane as a helical span at residues 104–124; it reads ILYWIAQLLGSVVACLILKFA. Topologically, residues 125–143 are vacuolar; that stretch reads TGGLAVPAFGLSAGVGVLN. Residues 144-164 form a helical membrane-spanning segment; sequence AFVFEIVMTFGLVYTVYATAI. At 165–172 the chain is on the cytoplasmic side; sequence DPKNGSLG. A helical membrane pass occupies residues 173–193; it reads TIAPIAIGFIVGANILAGGAF. Topologically, residues 194–218 are vacuolar; the sequence is SGASMNPAVAFGPAVVSWTWTNHWV. The NPA 2 signature appears at 199–201; sequence NPA. The helical transmembrane segment at 219–239 threads the bilayer; sequence YWAGPLVGGGIAGLIYEVFFI. At 240–251 the chain is on the cytoplasmic side; the sequence is NTTHEQLPTTDY.

The protein belongs to the MIP/aquaporin (TC 1.A.8) family. TIP (TC 1.A.8.10) subfamily. In terms of assembly, interacts with cucumber mosaic virus (CMV) Protein 1a. In terms of tissue distribution, in all the vegetative organs, but not in seeds. Preferentially expressed in roots.

The protein localises to the vacuole membrane. Its function is as follows. Water channel required to facilitate the transport of water, diffusion of amino acids and/or peptides from the vacuolar compartment to the cytoplasm. Does not promote glycerol permeability. May play a role in the control of cell turgor and cell expansion. Its function is impaired by Hg(2+). May be involved in a vesicle-based metabolite routing through or between pre-vacuolar compartments and the central vacuole. Transports urea in yeast cells in a pH-independent manner. Transports H(2)O(2) in yeast cells. This Arabidopsis thaliana (Mouse-ear cress) protein is Aquaporin TIP1-1 (TIP1-1).